Here is a 100-residue protein sequence, read N- to C-terminus: Large ribosomal subunit protein uL23 (100 aa).

This sequence belongs to the universal ribosomal protein uL23 family. In terms of assembly, part of the 50S ribosomal subunit. Contacts protein L29, and trigger factor when it is bound to the ribosome.

In terms of biological role, one of the early assembly proteins it binds 23S rRNA. One of the proteins that surrounds the polypeptide exit tunnel on the outside of the ribosome. Forms the main docking site for trigger factor binding to the ribosome. This Shewanella halifaxensis (strain HAW-EB4) protein is Large ribosomal subunit protein uL23.